A 381-amino-acid chain; its full sequence is MIISSANDYREAARRRVPPFMFHYADGGSFSERTLERNVTDLADLALRQRVLKDMSQLDTEIELFGEKLAMPAVLAPVGACGMYARRGEVQAAQAAENKGIPFTLSTVSICPIEEVTAAIKRPMWFQLYVLKDRGFMKHVLERAKAAGCSTLVFTVDMPTPGARYRDRHSGMSGDYKEIRRALQAVTHPFWAWDVGIKGKPHTLGNVSAYTGKAVGLDDYVVWLGENFDPSISWKDLEWIRDFWDGPMVIKGILDPEDAKDAVRFGADGIVVSNHGGRQLDGALSSARALPSIADAVKGDIKILADSGIRNGLDIVRMLALGADATMLGRAFVYALGAAGKAGVENMLDIFKKEMHVAMTLTSNQKISDITRDALVDLSKL.

Residues 1-380 (MIISSANDYR…TRDALVDLSK (380 aa)) form the FMN hydroxy acid dehydrogenase domain. Tyrosine 24 contacts substrate. Residues serine 106 and glutamine 127 each contribute to the FMN site. Tyrosine 129 serves as a coordination point for substrate. Threonine 155 serves as a coordination point for FMN. Arginine 164 contributes to the substrate binding site. Lysine 251 contacts FMN. The active-site Proton acceptor is histidine 275. Position 278 (arginine 278) interacts with substrate. 306–330 (DSGIRNGLDIVRMLALGADATMLGR) is an FMN binding site.

This sequence belongs to the FMN-dependent alpha-hydroxy acid dehydrogenase family. FMN is required as a cofactor.

The protein resides in the cell inner membrane. It catalyses the reaction (S)-lactate + A = pyruvate + AH2. In terms of biological role, catalyzes the conversion of L-lactate to pyruvate. Is coupled to the respiratory chain. The sequence is that of L-lactate dehydrogenase from Actinobacillus pleuropneumoniae serotype 5b (strain L20).